The sequence spans 427 residues: 3-phosphoshikimate 1-carboxyvinyltransferase (427 aa).

Positions 20, 21, and 25 each coordinate 3-phosphoshikimate. Lys20 is a binding site for phosphoenolpyruvate. Phosphoenolpyruvate-binding residues include Gly92 and Arg120. 3-phosphoshikimate contacts are provided by Ser166, Gln168, Asp312, and Lys339. Phosphoenolpyruvate is bound at residue Gln168. Asp312 (proton acceptor) is an active-site residue. 2 residues coordinate phosphoenolpyruvate: Arg343 and Arg385.

The protein belongs to the EPSP synthase family. Monomer.

Its subcellular location is the cytoplasm. It carries out the reaction 3-phosphoshikimate + phosphoenolpyruvate = 5-O-(1-carboxyvinyl)-3-phosphoshikimate + phosphate. It participates in metabolic intermediate biosynthesis; chorismate biosynthesis; chorismate from D-erythrose 4-phosphate and phosphoenolpyruvate: step 6/7. In terms of biological role, catalyzes the transfer of the enolpyruvyl moiety of phosphoenolpyruvate (PEP) to the 5-hydroxyl of shikimate-3-phosphate (S3P) to produce enolpyruvyl shikimate-3-phosphate and inorganic phosphate. In Streptococcus pyogenes serotype M28 (strain MGAS6180), this protein is 3-phosphoshikimate 1-carboxyvinyltransferase.